A 459-amino-acid polypeptide reads, in one-letter code: Bifunctional protein GlmU (459 aa).

The pyrophosphorylase stretch occupies residues 1 to 228 (MNFKAIILAA…IEELMGVNSR (228 aa)). Residues 8–11 (LAAG), K22, Q72, and 77–78 (GT) contribute to the UDP-N-acetyl-alpha-D-glucosamine site. Position 101 (D101) interacts with Mg(2+). 4 residues coordinate UDP-N-acetyl-alpha-D-glucosamine: G138, E153, N168, and N226. A Mg(2+)-binding site is contributed by N226. A linker region spans residues 229 to 249 (VELSKAEEIMRRRINESHMVN). An N-acetyltransferase region spans residues 250 to 459 (GVTIIDTNST…KKNQKDDQSK (210 aa)). UDP-N-acetyl-alpha-D-glucosamine is bound by residues R331 and K349. H361 functions as the Proton acceptor in the catalytic mechanism. Residues Y364 and N375 each coordinate UDP-N-acetyl-alpha-D-glucosamine. Residues 384-385 (NY), S403, T421, and R438 each bind acetyl-CoA.

This sequence in the N-terminal section; belongs to the N-acetylglucosamine-1-phosphate uridyltransferase family. In the C-terminal section; belongs to the transferase hexapeptide repeat family. As to quaternary structure, homotrimer. It depends on Mg(2+) as a cofactor.

Its subcellular location is the cytoplasm. The catalysed reaction is alpha-D-glucosamine 1-phosphate + acetyl-CoA = N-acetyl-alpha-D-glucosamine 1-phosphate + CoA + H(+). It catalyses the reaction N-acetyl-alpha-D-glucosamine 1-phosphate + UTP + H(+) = UDP-N-acetyl-alpha-D-glucosamine + diphosphate. It functions in the pathway nucleotide-sugar biosynthesis; UDP-N-acetyl-alpha-D-glucosamine biosynthesis; N-acetyl-alpha-D-glucosamine 1-phosphate from alpha-D-glucosamine 6-phosphate (route II): step 2/2. The protein operates within nucleotide-sugar biosynthesis; UDP-N-acetyl-alpha-D-glucosamine biosynthesis; UDP-N-acetyl-alpha-D-glucosamine from N-acetyl-alpha-D-glucosamine 1-phosphate: step 1/1. It participates in bacterial outer membrane biogenesis; LPS lipid A biosynthesis. Its function is as follows. Catalyzes the last two sequential reactions in the de novo biosynthetic pathway for UDP-N-acetylglucosamine (UDP-GlcNAc). The C-terminal domain catalyzes the transfer of acetyl group from acetyl coenzyme A to glucosamine-1-phosphate (GlcN-1-P) to produce N-acetylglucosamine-1-phosphate (GlcNAc-1-P), which is converted into UDP-GlcNAc by the transfer of uridine 5-monophosphate (from uridine 5-triphosphate), a reaction catalyzed by the N-terminal domain. The sequence is that of Bifunctional protein GlmU from Clostridioides difficile (strain 630) (Peptoclostridium difficile).